Reading from the N-terminus, the 223-residue chain is Deoxyribose-phosphate aldolase 2 (223 aa).

Catalysis depends on Asp92, which acts as the Proton donor/acceptor. Lys154 acts as the Schiff-base intermediate with acetaldehyde in catalysis. Residue Lys183 is the Proton donor/acceptor of the active site.

It belongs to the DeoC/FbaB aldolase family. DeoC type 1 subfamily.

Its subcellular location is the cytoplasm. It catalyses the reaction 2-deoxy-D-ribose 5-phosphate = D-glyceraldehyde 3-phosphate + acetaldehyde. It functions in the pathway carbohydrate degradation; 2-deoxy-D-ribose 1-phosphate degradation; D-glyceraldehyde 3-phosphate and acetaldehyde from 2-deoxy-alpha-D-ribose 1-phosphate: step 2/2. In terms of biological role, catalyzes a reversible aldol reaction between acetaldehyde and D-glyceraldehyde 3-phosphate to generate 2-deoxy-D-ribose 5-phosphate. This is Deoxyribose-phosphate aldolase 2 from Oceanobacillus iheyensis (strain DSM 14371 / CIP 107618 / JCM 11309 / KCTC 3954 / HTE831).